Here is a 262-residue protein sequence, read N- to C-terminus: Type III pantothenate kinase (262 aa).

Residue 9-16 (DIGNTNIV) participates in ATP binding. Residues Y103 and 110 to 113 (GVDR) each bind substrate. The active-site Proton acceptor is D112. D132 contacts K(+). Position 135 (T135) interacts with ATP. T187 is a binding site for substrate.

Belongs to the type III pantothenate kinase family. As to quaternary structure, homodimer. Requires NH4(+) as cofactor. K(+) is required as a cofactor.

Its subcellular location is the cytoplasm. The catalysed reaction is (R)-pantothenate + ATP = (R)-4'-phosphopantothenate + ADP + H(+). It functions in the pathway cofactor biosynthesis; coenzyme A biosynthesis; CoA from (R)-pantothenate: step 1/5. In terms of biological role, catalyzes the phosphorylation of pantothenate (Pan), the first step in CoA biosynthesis. This is Type III pantothenate kinase from Finegoldia magna (strain ATCC 29328 / DSM 20472 / WAL 2508) (Peptostreptococcus magnus).